The sequence spans 268 residues: NADH-quinone oxidoreductase subunit B 1 (268 aa).

[4Fe-4S] cluster is bound by residues C42, C43, C108, and C138.

Belongs to the complex I 20 kDa subunit family. As to quaternary structure, NDH-1 is composed of 14 different subunits. Subunits NuoB, C, D, E, F, and G constitute the peripheral sector of the complex. [4Fe-4S] cluster is required as a cofactor.

It localises to the cell membrane. The enzyme catalyses a quinone + NADH + 5 H(+)(in) = a quinol + NAD(+) + 4 H(+)(out). NDH-1 shuttles electrons from NADH, via FMN and iron-sulfur (Fe-S) centers, to quinones in the respiratory chain. The immediate electron acceptor for the enzyme in this species is believed to be ubiquinone. Couples the redox reaction to proton translocation (for every two electrons transferred, four hydrogen ions are translocated across the cytoplasmic membrane), and thus conserves the redox energy in a proton gradient. The chain is NADH-quinone oxidoreductase subunit B 1 from Roseiflexus sp. (strain RS-1).